The following is a 403-amino-acid chain: Tyrosine--tRNA ligase (403 aa).

A 'HIGH' region motif is present at residues 42–51; sequence PTAPDLHLGH. Positions 226–230 match the 'KMSKS' region motif; sequence KMSKS. Lys-229 lines the ATP pocket. Residues 339 to 400 enclose the S4 RNA-binding domain; sequence LRLAGLLTAA…GKRNFARVLL (62 aa).

The protein belongs to the class-I aminoacyl-tRNA synthetase family. TyrS type 2 subfamily. In terms of assembly, homodimer.

The protein resides in the cytoplasm. It catalyses the reaction tRNA(Tyr) + L-tyrosine + ATP = L-tyrosyl-tRNA(Tyr) + AMP + diphosphate + H(+). In terms of biological role, catalyzes the attachment of tyrosine to tRNA(Tyr) in a two-step reaction: tyrosine is first activated by ATP to form Tyr-AMP and then transferred to the acceptor end of tRNA(Tyr). This Xanthomonas euvesicatoria pv. vesicatoria (strain 85-10) (Xanthomonas campestris pv. vesicatoria) protein is Tyrosine--tRNA ligase.